A 206-amino-acid polypeptide reads, in one-letter code: A-type ATP synthase subunit D (206 aa).

The protein belongs to the V-ATPase D subunit family. In terms of assembly, has multiple subunits with at least A(3), B(3), C, D, E, F, H, I and proteolipid K(x).

It is found in the cell membrane. In terms of biological role, component of the A-type ATP synthase that produces ATP from ADP in the presence of a proton gradient across the membrane. This is A-type ATP synthase subunit D from Methanococcoides burtonii (strain DSM 6242 / NBRC 107633 / OCM 468 / ACE-M).